Reading from the N-terminus, the 300-residue chain is Estradiol 17-beta-dehydrogenase 11 (300 aa).

A signal peptide spans 1–19; sequence MKFLLDILLLLPLLIVCSL. An NADP(+)-binding site is contributed by 40–64; sequence LITGAGHGIGRLTAYEFAKLKSKLV. Ser-172 serves as a coordination point for substrate. Catalysis depends on Tyr-185, which acts as the Proton acceptor.

The protein belongs to the short-chain dehydrogenases/reductases (SDR) family. 17-beta-HSD 3 subfamily. In terms of tissue distribution, present at high level in steroidogenic cells such as syncytiotrophoblasts, sebaceous gland, Leydig cells, and granulosa cells of the dominant follicle and corpus luteum. In lung, it is detected in the ciliated epithelium and in acini of adult trachea, in bronchioles, but not in alveoli. In the eye, it is detected in the nonpigmented epithelium of the ciliary body and, at lower level, in the inner nuclear layer of the retina (at protein level). Widely expressed. Highly expressed in retina, pancreas, kidney, liver, lung, adrenal, small intestine, ovary and heart.

It localises to the endoplasmic reticulum. It is found in the lipid droplet. The enzyme catalyses 17beta-estradiol + NAD(+) = estrone + NADH + H(+). It catalyses the reaction 17beta-estradiol + NADP(+) = estrone + NADPH + H(+). In terms of biological role, can convert androstan-3-alpha,17-beta-diol (3-alpha-diol) to androsterone in vitro, suggesting that it may participate in androgen metabolism during steroidogenesis. May act by metabolizing compounds that stimulate steroid synthesis and/or by generating metabolites that inhibit it. Has no activity toward DHEA (dehydroepiandrosterone), or A-dione (4-androste-3,17-dione), and only a slight activity toward testosterone to A-dione. Tumor-associated antigen in cutaneous T-cell lymphoma. The chain is Estradiol 17-beta-dehydrogenase 11 (HSD17B11) from Homo sapiens (Human).